Here is a 116-residue protein sequence, read N- to C-terminus: Non-specific lipid transfer protein GPI-anchored 17 (116 aa).

The first 24 residues, 1 to 24, serve as a signal peptide directing secretion; it reads MKIGVVLVLLTVFVVVMSSTSVSA. 3 disulfides stabilise this stretch: Cys-31-Cys-74, Cys-42-Cys-58, and Cys-59-Cys-99. Asn-107 is lipidated: GPI-anchor amidated asparagine. The propeptide at 108–116 is removed in mature form; it reads GKNFKNTSL. An N-linked (GlcNAc...) asparagine glycan is attached at Asn-113.

It belongs to the plant LTP family. In terms of tissue distribution, expressed in seedlings, preferentially in roots.

Its subcellular location is the cell membrane. Its function is as follows. Probable lipid transfer protein. The protein is Non-specific lipid transfer protein GPI-anchored 17 of Arabidopsis thaliana (Mouse-ear cress).